Reading from the N-terminus, the 187-residue chain is UPF0200 protein MA_4660 (187 aa).

Gly-9–Ser-16 contacts ATP.

The protein belongs to the UPF0200 family.

This is UPF0200 protein MA_4660 from Methanosarcina acetivorans (strain ATCC 35395 / DSM 2834 / JCM 12185 / C2A).